The following is a 104-amino-acid chain: Type VII secretion system extracellular protein B (104 aa).

It belongs to the WXG100 family. Homodimer. When mixed with EsxA does not form heterodimers. Forms heterodimers with EsxD.

It localises to the secreted. Virulence factor that is important for the establishment of infection in the host. EsxB is required for EsxA synthesis as well as secretion. Mediates together with EsxA the release of S.aureus from the host cell. Also inhibits host cytokine production and thus modulates dendritic cell-mediated immunity. The polypeptide is Type VII secretion system extracellular protein B (Staphylococcus aureus (strain USA300)).